Here is a 640-residue protein sequence, read N- to C-terminus: Threonine--tRNA ligase (640 aa).

Residues 1-61 enclose the TGS domain; it reads MPIIALPDGN…EKDSEVNIIT (61 aa). Residues 242–533 are catalytic; that stretch reads DHRRIAKQMS…LIEHYAGRLP (292 aa). Positions 333, 384, and 510 each coordinate Zn(2+).

This sequence belongs to the class-II aminoacyl-tRNA synthetase family. As to quaternary structure, homodimer. The cofactor is Zn(2+).

The protein localises to the cytoplasm. The catalysed reaction is tRNA(Thr) + L-threonine + ATP = L-threonyl-tRNA(Thr) + AMP + diphosphate + H(+). Catalyzes the attachment of threonine to tRNA(Thr) in a two-step reaction: L-threonine is first activated by ATP to form Thr-AMP and then transferred to the acceptor end of tRNA(Thr). Also edits incorrectly charged L-seryl-tRNA(Thr). The protein is Threonine--tRNA ligase of Prochlorococcus marinus (strain MIT 9313).